The primary structure comprises 257 residues: Protein TONNEAU 1b (257 aa).

Residues 73 to 105 (SGRLLSALICEYLDWAQLNHTLKVYQPECNSAK) enclose the LisH domain. Disordered regions lie at residues 148-216 (QVMG…EDMP) and 231-257 (LDRK…EGKD). Residues 187–199 (SVSASQASGAATS) are compositionally biased toward low complexity. Basic and acidic residues-rich tracts occupy residues 201 to 212 (YRKDESNWRYDT) and 244 to 257 (NVKD…EGKD).

Interacts with CEN1, LNG1/TRM2 and LNG2/TRM1 (via C-terminus).

It is found in the cytoplasm. Its subcellular location is the cytoskeleton. Its function is as follows. Involved in the control of the dynamic organization of the cortical cytoskeleton. May play a role in the organization of microtubule arrays at the centrosome through interaction with centrin 1 (CEN1). The protein is Protein TONNEAU 1b (TON1B) of Arabidopsis thaliana (Mouse-ear cress).